We begin with the raw amino-acid sequence, 390 residues long: Chitinase-3-like protein 2 (390 aa).

A signal peptide spans 1-26; sequence MGATTMDQKSLWAGVVVLLLLQGGSA. Positions 27 to 390 constitute a GH18 domain; the sequence is YKLVCYFTNW…QAVKRSLGSL (364 aa). Cysteines 31 and 56 form a disulfide. N-linked (GlcNAc...) asparagine glycosylation occurs at N35. Chitin-binding positions include 75–76, 102–105, Y104, Y146, 210–213, D213, and W360; these read DK, GGYL, and LSFD.

Belongs to the glycosyl hydrolase 18 family. Highest expression in chondrocytes, followed by synoviocytes, lung and heart. Not detected in spleen, pancreas, and liver. May also be expressed in developing brain and placenta.

Its subcellular location is the secreted. Functionally, lectin that binds chitooligosaccharides and other glycans with high affinity, but not heparin. Has no chitinase activity. The protein is Chitinase-3-like protein 2 (CHI3L2) of Homo sapiens (Human).